Here is a 263-residue protein sequence, read N- to C-terminus: Small ribosomal subunit protein eS4 (263 aa).

Residues 42–104 (LPLIIFLRNR…TGEHFRLVYD (63 aa)) enclose the S4 RNA-binding domain.

Belongs to the eukaryotic ribosomal protein eS4 family. As to quaternary structure, component of the small ribosomal subunit.

Its subcellular location is the cytoplasm. Its function is as follows. Component of the small ribosomal subunit. The ribosome is a large ribonucleoprotein complex responsible for the synthesis of proteins in the cell. This is Small ribosomal subunit protein eS4 (rps4) from Xenopus tropicalis (Western clawed frog).